A 201-amino-acid polypeptide reads, in one-letter code: Ras-related protein Rab-9A (201 aa).

N-acetylalanine is present on Ala2. Residues Gly17, Val18, Gly19, Lys20, Ser21, Ser22, Ser34, His38, and Thr39 each contribute to the GTP site. Ser21 serves as a coordination point for Mg(2+). The short motif at 31–42 (KFDSQLFHTIGV) is the Switch 1 element. At Ser34 the chain carries Phosphoserine. Residues Thr39 and Asp62 each coordinate Mg(2+). Positions 64–78 (AGQERFRSLRTPFYR) match the Switch 2 motif. The GTP site is built by Gly65, Asn124, Lys125, Asp127, and Lys156. The residue at position 179 (Ser179) is a Phosphoserine. At Thr187 the chain carries Phosphothreonine. S-geranylgeranyl cysteine attachment occurs at residues Cys200 and Cys201.

Belongs to the small GTPase superfamily. Rab family. As to quaternary structure, interacts (preferentially in its GTP-bound form) with GCC2 (via its GRIP domain). Interacts (GTP-bound form) with SGSM1; the GDP-bound form has much lower affinity for SGSM1. Interacts with SGSM2. The GTP-bound form but not the GDP-bound form interacts with HPS4 and the BLOC-3 complex (heterodimer of HPS1 and HPS4) but does not interact with HPS1 alone. Interacts (GTP-bound form) with NDE1; two RAB9A-GTP molecules lie on the opposite sides of the NDE1 homodimer; the interaction leads to RAB9A-dynein motor tethering. Interacts (GTP-bound form) with NDEL1. It depends on Mg(2+) as a cofactor.

It localises to the cell membrane. Its subcellular location is the endoplasmic reticulum membrane. It is found in the golgi apparatus membrane. The protein resides in the late endosome. The protein localises to the cytoplasmic vesicle. It localises to the phagosome membrane. Its subcellular location is the phagosome. It is found in the cytoplasmic vesicle membrane. The protein resides in the melanosome. It catalyses the reaction GTP + H2O = GDP + phosphate + H(+). Its activity is regulated as follows. Regulated by guanine nucleotide exchange factors (GEFs) which promote the exchange of bound GDP for free GTP. Regulated by GTPase activating proteins (GAPs) which increase the GTP hydrolysis activity. Inhibited by GDP dissociation inhibitors (GDIs). In terms of biological role, the small GTPases Rab are key regulators of intracellular membrane trafficking, from the formation of transport vesicles to their fusion with membranes. Rabs cycle between an inactive GDP-bound form and an active GTP-bound form that is able to recruit to membranes different sets of downstream effectors directly responsible for vesicle formation, movement, tethering and fusion. RAB9A is involved in the transport of proteins between the endosomes and the trans-Golgi network (TGN). Specifically uses NDE1/NDEL1 as an effector to interact with the dynein motor complex in order to control retrograde trafficking of RAB9-associated late endosomes to the TGN. Involved in the recruitment of SGSM2 to melanosomes and is required for the proper trafficking of melanogenic enzymes TYR, TYRP1 and DCT/TYRP2 to melanosomes in melanocytes. The protein is Ras-related protein Rab-9A of Rattus norvegicus (Rat).